The chain runs to 521 residues: GMP synthase [glutamine-hydrolyzing] (521 aa).

Residues 10-204 (SLLILDFGSQ…ALGICGCEND (195 aa)) enclose the Glutamine amidotransferase type-1 domain. Residue C87 is the Nucleophile of the active site. Catalysis depends on residues H178 and E180. Residues 205–396 (WNMHNFAEEQ…LGMPREMLMR (192 aa)) form the GMPS ATP-PPase domain. 232-238 (SGGVDSS) lines the ATP pocket.

In terms of assembly, homodimer.

It catalyses the reaction XMP + L-glutamine + ATP + H2O = GMP + L-glutamate + AMP + diphosphate + 2 H(+). It participates in purine metabolism; GMP biosynthesis; GMP from XMP (L-Gln route): step 1/1. In terms of biological role, catalyzes the synthesis of GMP from XMP. The protein is GMP synthase [glutamine-hydrolyzing] of Wolinella succinogenes (strain ATCC 29543 / DSM 1740 / CCUG 13145 / JCM 31913 / LMG 7466 / NCTC 11488 / FDC 602W) (Vibrio succinogenes).